The primary structure comprises 267 residues: Phosphate import ATP-binding protein PstB (267 aa).

One can recognise an ABC transporter domain in the interval 21-262 (VAARNLDFYY…PSKQQTEDYI (242 aa)). ATP is bound at residue 53–60 (GPSGCGKS).

Belongs to the ABC transporter superfamily. Phosphate importer (TC 3.A.1.7) family. As to quaternary structure, the complex is composed of two ATP-binding proteins (PstB), two transmembrane proteins (PstC and PstA) and a solute-binding protein (PstS).

Its subcellular location is the cell inner membrane. The enzyme catalyses phosphate(out) + ATP + H2O = ADP + 2 phosphate(in) + H(+). Part of the ABC transporter complex PstSACB involved in phosphate import. Responsible for energy coupling to the transport system. The sequence is that of Phosphate import ATP-binding protein PstB from Xanthomonas campestris pv. campestris (strain 8004).